The following is a 354-amino-acid chain: 3-dehydroquinate synthase (354 aa).

NAD(+) contacts are provided by residues 100 to 104 (GATGD), 124 to 125 (TT), lysine 136, lysine 145, and 163 to 166 (FLKT). Residues glutamate 178, histidine 242, and histidine 256 each contribute to the Zn(2+) site.

Belongs to the sugar phosphate cyclases superfamily. Dehydroquinate synthase family. Requires NAD(+) as cofactor. It depends on Co(2+) as a cofactor. Zn(2+) serves as cofactor.

Its subcellular location is the cytoplasm. The enzyme catalyses 7-phospho-2-dehydro-3-deoxy-D-arabino-heptonate = 3-dehydroquinate + phosphate. Its pathway is metabolic intermediate biosynthesis; chorismate biosynthesis; chorismate from D-erythrose 4-phosphate and phosphoenolpyruvate: step 2/7. Catalyzes the conversion of 3-deoxy-D-arabino-heptulosonate 7-phosphate (DAHP) to dehydroquinate (DHQ). In Staphylococcus aureus (strain MSSA476), this protein is 3-dehydroquinate synthase.